A 1085-amino-acid polypeptide reads, in one-letter code: Carbamoyl phosphate synthase large chain (1085 aa).

The carboxyphosphate synthetic domain stretch occupies residues 1–399 (MPKRTDISNI…ALQKALCSLE (399 aa)). The ATP site is built by Arg127, Arg167, Gly174, Glu206, Leu208, Glu213, Gly239, Val240, His241, Gln283, and Glu297. In terms of domain architecture, ATP-grasp 1 spans 131–326 (KEAMLKIGMD…IAKVATMLAV (196 aa)). Residues Gln283, Glu297, and Asn299 each coordinate Mg(2+). Mn(2+) contacts are provided by Gln283, Glu297, and Asn299. Residues 400–551 (NNWLGFESLS…YAPNPLPPIG (152 aa)) form an oligomerization domain region. The segment at 552 to 951 (NKQEKQEKKI…AFFKAQTACF (400 aa)) is carbamoyl phosphate synthetic domain. The ATP-grasp 2 domain maps to 678 to 871 (SLFLKELDIK…LAKVATRVMV (194 aa)). The ATP site is built by Arg714, Lys756, Leu758, Glu763, Gly788, Ile789, His790, Ser791, Gln830, and Glu842. Mg(2+)-binding residues include Gln830, Glu842, and Asn844. Residues Gln830, Glu842, and Asn844 each coordinate Mn(2+). In terms of domain architecture, MGS-like spans 952–1085 (NPIKNKGLIF…ELLALQDYLK (134 aa)). The tract at residues 952–1085 (NPIKNKGLIF…ELLALQDYLK (134 aa)) is allosteric domain.

The protein belongs to the CarB family. Composed of two chains; the small (or glutamine) chain promotes the hydrolysis of glutamine to ammonia, which is used by the large (or ammonia) chain to synthesize carbamoyl phosphate. Tetramer of heterodimers (alpha,beta)4. It depends on Mg(2+) as a cofactor. Mn(2+) serves as cofactor.

The enzyme catalyses hydrogencarbonate + L-glutamine + 2 ATP + H2O = carbamoyl phosphate + L-glutamate + 2 ADP + phosphate + 2 H(+). The catalysed reaction is hydrogencarbonate + NH4(+) + 2 ATP = carbamoyl phosphate + 2 ADP + phosphate + 2 H(+). It participates in amino-acid biosynthesis; L-arginine biosynthesis; carbamoyl phosphate from bicarbonate: step 1/1. It functions in the pathway pyrimidine metabolism; UMP biosynthesis via de novo pathway; (S)-dihydroorotate from bicarbonate: step 1/3. Functionally, large subunit of the glutamine-dependent carbamoyl phosphate synthetase (CPSase). CPSase catalyzes the formation of carbamoyl phosphate from the ammonia moiety of glutamine, carbonate, and phosphate donated by ATP, constituting the first step of 2 biosynthetic pathways, one leading to arginine and/or urea and the other to pyrimidine nucleotides. The large subunit (synthetase) binds the substrates ammonia (free or transferred from glutamine from the small subunit), hydrogencarbonate and ATP and carries out an ATP-coupled ligase reaction, activating hydrogencarbonate by forming carboxy phosphate which reacts with ammonia to form carbamoyl phosphate. This Helicobacter pylori (strain J99 / ATCC 700824) (Campylobacter pylori J99) protein is Carbamoyl phosphate synthase large chain.